Here is a 333-residue protein sequence, read N- to C-terminus: Ketol-acid reductoisomerase (NADP(+)) (333 aa).

Positions 1–179 (MFYDDDADLT…GGTRAGVIKT (179 aa)) constitute a KARI N-terminal Rossmann domain. Residues 22–25 (YGSQ), Lys45, Ser48, Ser50, and 80–83 (DTAQ) each bind NADP(+). Residue His105 is part of the active site. Position 131 (Gly131) interacts with NADP(+). A KARI C-terminal knotted domain is found at 180-325 (TFKDETETDL…KRLRDLMSWV (146 aa)). The Mg(2+) site is built by Asp188, Glu192, Glu224, and Glu228. Ser249 contributes to the substrate binding site.

The protein belongs to the ketol-acid reductoisomerase family. Mg(2+) serves as cofactor.

The enzyme catalyses (2R)-2,3-dihydroxy-3-methylbutanoate + NADP(+) = (2S)-2-acetolactate + NADPH + H(+). It carries out the reaction (2R,3R)-2,3-dihydroxy-3-methylpentanoate + NADP(+) = (S)-2-ethyl-2-hydroxy-3-oxobutanoate + NADPH + H(+). Its pathway is amino-acid biosynthesis; L-isoleucine biosynthesis; L-isoleucine from 2-oxobutanoate: step 2/4. The protein operates within amino-acid biosynthesis; L-valine biosynthesis; L-valine from pyruvate: step 2/4. In terms of biological role, involved in the biosynthesis of branched-chain amino acids (BCAA). Catalyzes an alkyl-migration followed by a ketol-acid reduction of (S)-2-acetolactate (S2AL) to yield (R)-2,3-dihydroxy-isovalerate. In the isomerase reaction, S2AL is rearranged via a Mg-dependent methyl migration to produce 3-hydroxy-3-methyl-2-ketobutyrate (HMKB). In the reductase reaction, this 2-ketoacid undergoes a metal-dependent reduction by NADPH to yield (R)-2,3-dihydroxy-isovalerate. The sequence is that of Ketol-acid reductoisomerase (NADP(+)) from Mycobacterium avium (strain 104).